A 248-amino-acid chain; its full sequence is Small ribosomal subunit protein uS3 (248 aa).

The KH type-2 domain maps to 39–107 (IRQMLLKQLK…EVFINIVEIR (69 aa)). The disordered stretch occupies residues 214–248 (AVDKRMTAESEGPSSGRPPRRDRDRDRDRDRDSAA). Residues 232–248 (PRRDRDRDRDRDRDSAA) show a composition bias toward basic and acidic residues.

Belongs to the universal ribosomal protein uS3 family. Part of the 30S ribosomal subunit. Forms a tight complex with proteins S10 and S14.

In terms of biological role, binds the lower part of the 30S subunit head. Binds mRNA in the 70S ribosome, positioning it for translation. This chain is Small ribosomal subunit protein uS3, found in Azorhizobium caulinodans (strain ATCC 43989 / DSM 5975 / JCM 20966 / LMG 6465 / NBRC 14845 / NCIMB 13405 / ORS 571).